Consider the following 192-residue polypeptide: Large ribosomal subunit protein bL9 (192 aa).

The disordered stretch occupies residues 173–192 (ALRPEDFFDPEADGVDEDEA). Residues 179 to 192 (FFDPEADGVDEDEA) show a composition bias toward acidic residues.

Belongs to the bacterial ribosomal protein bL9 family.

Functionally, binds to the 23S rRNA. The chain is Large ribosomal subunit protein bL9 (rplI) from Rhizobium leguminosarum bv. trifolii.